A 533-amino-acid chain; its full sequence is DNA-directed RNA polymerase III subunit RPC3 (533 aa).

A Phosphoserine modification is found at S194. The interval 197–230 (GKGKRRRSSDEDATGEPKAKRPKQTTDNKEPIPD) is disordered. Positions 211 to 228 (GEPKAKRPKQTTDNKEPI) are enriched in basic and acidic residues.

Belongs to the eukaryotic RPC3/POLR3C RNA polymerase subunit family. As to quaternary structure, component of the RNA polymerase III complex consisting of 17 subunits: a ten-subunit horseshoe-shaped catalytic core composed of POLR3A/RPC1, POLR3B/RPC2, POLR1C/RPAC1, POLR1D/RPAC2, POLR3K/RPC10, POLR2E/RPABC1, POLR2F/RPABC2, POLR2H/RPABC3, POLR2K/RPABC4 and POLR2L/RPABC5; a mobile stalk composed of two subunits POLR3H/RPC8 and CRCP/RPC9, protruding from the core and functioning primarily in transcription initiation; and additional subunits homologous to general transcription factors of the RNA polymerase II machinery, POLR3C/RPC3-POLR3F/RPC6-POLR3G/RPC7 heterotrimer required for transcription initiation and POLR3D/RPC4-POLR3E/RPC5 heterodimer involved in both transcription initiation and termination. Directly interacts with POLR3G/RPC7 and POLR3GL. Directly interacts with POLR3F/RPC6. Interacts with GTF3C4. As part of the RNA polymerase III complex, interacts with PKP2.

It localises to the nucleus. Functionally, DNA-dependent RNA polymerase catalyzes the transcription of DNA into RNA using the four ribonucleoside triphosphates as substrates. Specific peripheric component of RNA polymerase III (Pol III) which synthesizes small non-coding RNAs including 5S rRNA, snRNAs, tRNAs and miRNAs from at least 500 distinct genomic loci. Part of POLR3C/RPC3-POLR3F/RPC6-POLR3G/RPC7 heterotrimer, coordinates the dynamics of Pol III stalk and clamp modules during the transition from apo to elongation state. Pol III plays a key role in sensing and limiting infection by intracellular bacteria and DNA viruses. Acts as a nuclear and cytosolic DNA sensor involved in innate immune response. Can sense non-self dsDNA that serves as template for transcription into dsRNA. The non-self RNA polymerase III transcripts, such as Epstein-Barr virus-encoded RNAs (EBERs) induce type I interferon and NF-kappa-B through the RIG-I pathway. Preferentially binds single-stranded DNA (ssDNA) in a sequence-independent manner. This chain is DNA-directed RNA polymerase III subunit RPC3 (POLR3C), found in Bos taurus (Bovine).